We begin with the raw amino-acid sequence, 202 residues long: Prephenate decarboxylase (202 aa).

It belongs to the prephenate decarboxylase family.

The catalysed reaction is prephenate + H(+) = 3-[(4R)-4-hydroxycyclohexa-1,5-dien-1-yl]-2-oxopropanoate + CO2. In terms of biological role, in vivo, involved in the biosynthesis of 2-carboxy-6-hydroxyoctahydroindole (Choi) present in the nonribosomal glycopeptides aeruginoside 126A and B. AerD is an unusual prephenate decarboxylase that avoids the typical aromatization of the cyclohexadienol ring of prephenate. AerD catalyzes the protonation at C8 followed by decarboxylation to produce the dihydro-4-hydroxyphenylpyruvate regioisomer A258 (H2HPP A258)(3-(4-hydroxycyclohexa- 1,5-dienyl)-2-oxopropanoic acid), which is able to undergo a nonenzymatic isomerization to produce dihydro-4-hydroxyphenylpyruvate regioisomer A295 (H2HPP A295)(3-(4-hydroxycyclohex-2-enylidene)-2-oxopropanoic acid). The sequence is that of Prephenate decarboxylase from Planktothrix agardhii (strain NIVA-CYA 126/8).